A 424-amino-acid polypeptide reads, in one-letter code: Endoglucanase (424 aa).

Residues 1 to 19 (MHRCMPLVAASMAALMLAG) form the signal peptide. Cys20 carries the N-palmitoyl cysteine lipid modification. Cys20 carries S-diacylglycerol cysteine lipidation. A propeptide spanning residues 20–43 (CGGGDGDTTLSTAAATDTTTLKTA) is cleaved from the precursor. The active-site Proton donor is Glu247. Glu359 serves as the catalytic Nucleophile.

The protein belongs to the glycosyl hydrolase 5 (cellulase A) family.

It is found in the cell membrane. It catalyses the reaction Endohydrolysis of (1-&gt;4)-beta-D-glucosidic linkages in cellulose, lichenin and cereal beta-D-glucans.. The protein is Endoglucanase (egl) of Ralstonia nicotianae (strain ATCC BAA-1114 / GMI1000) (Ralstonia solanacearum).